Reading from the N-terminus, the 165-residue chain is Pro-MCH (165 aa).

An N-terminal signal peptide occupies residues Met-1 to Gly-21. The tract at residues Asn-68 to Lys-88 is disordered. An Isoleucine amide modification is found at Ile-143. Cys-153 and Cys-162 are joined by a disulfide.

Belongs to the melanin-concentrating hormone family. Pro-MCH is processed differentially in the brain and in peripheral organs producing two neuropeptides; NEI and MCH. A third peptide, NGE, may also be produced. Preferential processing in neurons by prohormone convertase 2 (PC2) generates NEI. MCH is generated in neurons of the lateral hypothalmic area by several prohormone convertases including PC1/3, PC2 and PC5/6.

It is found in the secreted. Its function is as follows. MCH may act as a neurotransmitter or neuromodulator in a broad array of neuronal functions directed toward the regulation of goal-directed behavior, such as food intake, and general arousal. This is Pro-MCH (PMCH) from Canis lupus familiaris (Dog).